A 120-amino-acid polypeptide reads, in one-letter code: Glycine cleavage system H protein (120 aa).

In terms of domain architecture, Lipoyl-binding spans 17-99 (VATVGITAHA…QGGGWLYRLK (83 aa)). K58 carries the post-translational modification N6-lipoyllysine.

This sequence belongs to the GcvH family. The glycine cleavage system is composed of four proteins: P, T, L and H. It depends on (R)-lipoate as a cofactor.

Its function is as follows. The glycine cleavage system catalyzes the degradation of glycine. The H protein shuttles the methylamine group of glycine from the P protein to the T protein. The sequence is that of Glycine cleavage system H protein from Methylorubrum extorquens (strain CM4 / NCIMB 13688) (Methylobacterium extorquens).